Consider the following 210-residue polypeptide: MKKGLIAKKLGMTQIFAEDGKRIPVTVVQAGPCVVLQKKTSATDGYDAIQVGFLSQEARKVTKPMLGHIKAAGQGAFAHIREFRLDDVDRYNVGDVISADAFEVGEYIDVTGTSIGKGFQGVIKRWGFRGGRSSHGSCFHRAPGSIGSSAYPSRVFKNKKMPGQLGNERVTVQRLQVVRVDAADNILLIKGAIPGAKNGIVLVKDTVKPR.

The protein belongs to the universal ribosomal protein uL3 family. As to quaternary structure, part of the 50S ribosomal subunit. Forms a cluster with proteins L14 and L19.

Its function is as follows. One of the primary rRNA binding proteins, it binds directly near the 3'-end of the 23S rRNA, where it nucleates assembly of the 50S subunit. The polypeptide is Large ribosomal subunit protein uL3 (Geobacter sulfurreducens (strain ATCC 51573 / DSM 12127 / PCA)).